A 203-amino-acid polypeptide reads, in one-letter code: Putative 3-methyladenine DNA glycosylase (203 aa).

Belongs to the DNA glycosylase MPG family.

This Clostridium tetani (strain Massachusetts / E88) protein is Putative 3-methyladenine DNA glycosylase.